The primary structure comprises 556 residues: 2-isopropylmalate synthase (556 aa).

The region spanning 33-307 is the Pyruvate carboxyltransferase domain; that stretch reads PIWLSTDLRD…DPQLDFSDID (275 aa). Mg(2+) contacts are provided by aspartate 42, histidine 246, histidine 248, and asparagine 282. The segment at 439-556 is regulatory domain; sequence ASAPYALKGH…ALSQAESRAA (118 aa).

The protein belongs to the alpha-IPM synthase/homocitrate synthase family. LeuA type 2 subfamily. As to quaternary structure, homodimer. The cofactor is Mg(2+).

The protein resides in the cytoplasm. It catalyses the reaction 3-methyl-2-oxobutanoate + acetyl-CoA + H2O = (2S)-2-isopropylmalate + CoA + H(+). The protein operates within amino-acid biosynthesis; L-leucine biosynthesis; L-leucine from 3-methyl-2-oxobutanoate: step 1/4. Functionally, catalyzes the condensation of the acetyl group of acetyl-CoA with 3-methyl-2-oxobutanoate (2-ketoisovalerate) to form 3-carboxy-3-hydroxy-4-methylpentanoate (2-isopropylmalate). The polypeptide is 2-isopropylmalate synthase (Ectopseudomonas mendocina (strain ymp) (Pseudomonas mendocina)).